We begin with the raw amino-acid sequence, 249 residues long: DnaJ homolog subfamily C member 5 homolog (249 aa).

Ser12 bears the Phosphoserine mark. A Phosphothreonine modification is found at Thr13. Phosphoserine occurs at positions 14 and 17. Residues 15–84 (GDSLYEILGL…RNIYDNYGSL (70 aa)) form the J domain. Tyr19 is subject to Phosphotyrosine. Basic and acidic residues predominate over residues 146–162 (HDQYSHLNRPDGNREGN). Disordered regions lie at residues 146 to 177 (HDQY…LEDV) and 218 to 249 (PFTG…NQKY). Residues 227 to 241 (NENTSLNTTEQTTYT) show a composition bias toward polar residues.

Post-translationally, fatty acylated. Heavily palmitoylated in the cysteine string motif. As to expression, expressed in wide range of synaptic terminals: embryonic nervous system, larval neuromuscular junctions, adult visual system (neuropil of optic ganglia and terminal of R1-8 photoreceptors) and thoracic neuromuscular junctions. Also expressed in non-neuronal cells: follicle cells, spermatheca, testis and ejaculatory bulb. Low level of expression is found in many neuronal and non-neuronal tissues.

It is found in the membrane. Functionally, may have an important role in presynaptic function. In Drosophila melanogaster (Fruit fly), this protein is DnaJ homolog subfamily C member 5 homolog.